A 44-amino-acid polypeptide reads, in one-letter code: QKLCERPSGTWSGVCGNNNACKNQCINLEKARHGSCNYVFPAHK.

The residue at position 1 (glutamine 1) is a Pyrrolidone carboxylic acid. Cysteine 15 and cysteine 36 are oxidised to a cystine.

The protein belongs to the DEFL family. In terms of assembly, forms oligomers in its native state.

It is found in the secreted. In terms of biological role, possesses antifungal activity sensitive to inorganic cations. This is Defensin-like protein 1 (AFP1) from Brassica napus (Rape).